Reading from the N-terminus, the 469-residue chain is Neuraminidase (469 aa).

Residues 1–6 (MNPNQK) lie on the Intravirion side of the membrane. A helical transmembrane segment spans residues 7–27 (LFASSGIAIALGIINLLIGIS). An involved in apical transport and lipid raft association region spans residues 11-33 (SGIAIALGIINLLIGISNMSLNI). Asn-28, Asn-32, Asn-46, Asn-55, Asn-56, Asn-65, Asn-66, and Asn-85 each carry an N-linked (GlcNAc...) asparagine; by host glycan. At 28-469 (NMSLNISLYS…PDGAQIKYFS (442 aa)) the chain is on the virion surface side. A hypervariable stalk region region spans residues 36-85 (YSKGENHKSDNLTCTNINQNNTTMVNTYINNTTIIDKNTKMENPGYLLLN). The segment at 88-469 (LCNVEGWVVI…PDGAQIKYFS (382 aa)) is head of neuraminidase. Disulfide bonds link Cys-89/Cys-417, Cys-121/Cys-126, Cys-181/Cys-228, Cys-230/Cys-235, Cys-276/Cys-289, Cys-278/Cys-287, Cys-316/Cys-334, and Cys-421/Cys-448. Position 115 (Arg-115) interacts with substrate. N-linked (GlcNAc...) asparagine; by host glycosylation is present at Asn-143. Asp-148 functions as the Proton donor/acceptor in the catalytic mechanism. Residue Arg-149 participates in substrate binding. Residues Asn-198 and Asn-232 are each glycosylated (N-linked (GlcNAc...) asparagine; by host). 274-275 (EE) is a substrate binding site. Position 290 (Arg-290) interacts with substrate. 3 residues coordinate Ca(2+): Asp-291, Gly-295, and Asp-322. Asn-356 is a glycosylation site (N-linked (GlcNAc...) asparagine; by host). Position 369 (Arg-369) interacts with substrate. Residue Asn-399 is glycosylated (N-linked (GlcNAc...) asparagine; by host). Residue Tyr-403 is the Nucleophile of the active site.

This sequence belongs to the glycosyl hydrolase 34 family. As to quaternary structure, homotetramer. Requires Ca(2+) as cofactor. Post-translationally, N-glycosylated.

Its subcellular location is the virion membrane. It localises to the host apical cell membrane. The catalysed reaction is Hydrolysis of alpha-(2-&gt;3)-, alpha-(2-&gt;6)-, alpha-(2-&gt;8)- glycosidic linkages of terminal sialic acid residues in oligosaccharides, glycoproteins, glycolipids, colominic acid and synthetic substrates.. Inhibited by the neuraminidase inhibitors zanamivir (Relenza) and oseltamivir (Tamiflu). These drugs interfere with the release of progeny virus from infected cells and are effective against all influenza strains. Resistance to neuraminidase inhibitors is quite rare. Its function is as follows. Catalyzes the removal of terminal sialic acid residues from viral and cellular glycoconjugates. Cleaves off the terminal sialic acids on the glycosylated HA during virus budding to facilitate virus release. Additionally helps virus spread through the circulation by further removing sialic acids from the cell surface. These cleavages prevent self-aggregation and ensure the efficient spread of the progeny virus from cell to cell. Otherwise, infection would be limited to one round of replication. Described as a receptor-destroying enzyme because it cleaves a terminal sialic acid from the cellular receptors. May facilitate viral invasion of the upper airways by cleaving the sialic acid moieties on the mucin of the airway epithelial cells. Likely to plays a role in the budding process through its association with lipid rafts during intracellular transport. May additionally display a raft-association independent effect on budding. Plays a role in the determination of host range restriction on replication and virulence. Sialidase activity in late endosome/lysosome traffic seems to enhance virus replication. The protein is Neuraminidase of Influenza A virus (strain A/Equine/Prague/1/1956 H7N7).